The primary structure comprises 326 residues: MYGIEYTTVLTFLISVILLNYVLKSLTRIMDFIIYRFLLIIVILSPLLDAQNYGINLPITGSMDTPYTNSTREEVFLTSTLCLYYPTEAATEINDNSWKDTLSQLFLTKGWPTGSIYFKDYTDIASFSVDPQLYCDYNLVLMKYDATLQLDMSELADLLLNEWLCNPMDITLYYYQQTDEANKWISMGSSCTIKVCPLNTQTLGIGCLTTDTNTFEEVATAEKLVITDVVDGVNHKLKVTTDTCTIRNCKKLGPRENVAVIQVGGSDVLDITADPTTAPQTERMMRVNWKKWWQVFYTIVDYVNQIVQAMSKRSRSLNSAAFYYRV.

An N-terminal signal peptide occupies residues 1–50 (MYGIEYTTVLTFLISVILLNYVLKSLTRIMDFIIYRFLLIIVILSPLLDA). N69 carries an N-linked (GlcNAc...) asparagine; by host glycan. Disulfide bonds link C82–C135, C165–C249, C191–C244, and C196–C207. D95 provides a ligand contact to Ca(2+). The interval 165-167 (CNP) is CNP motif; interaction with ITGAV/ITGB3. Residues Q177, G206, T214, E216, D228, V229, and D231 each coordinate Ca(2+). A GPR motif; interaction with ITGAX/ITGB2 region spans residues 253–255 (GPR). D301 is a Ca(2+) binding site.

Belongs to the rotavirus VP7 family. As to quaternary structure, homotrimer; disulfide-linked. 2 Ca(2+) ions bound at each subunit interface in the trimer hold the trimer together. Interacts with the intermediate capsid protein VP6. Interacts with the outer capsid protein VP5*. Post-translationally, N-glycosylated. The N-terminus is blocked possibly by pyroglutamic acid.

The protein localises to the virion. It is found in the host endoplasmic reticulum lumen. In terms of biological role, calcium-binding protein that interacts with rotavirus cell receptors once the initial attachment by VP4 has been achieved. Rotavirus attachment and entry into the host cell probably involves multiple sequential contacts between the outer capsid proteins VP4 and VP7, and the cell receptors. Following entry into the host cell, low intracellular or intravesicular Ca(2+) concentration probably causes the calcium-stabilized VP7 trimers to dissociate from the virion. This step is probably necessary for the membrane-disrupting entry step and the release of VP4, which is locked onto the virion by VP7. The sequence is that of Outer capsid glycoprotein VP7 from Rotavirus A (strain RVA/Human/United States/M/1976/G3P[X]) (RV-A).